Here is a 145-residue protein sequence, read N- to C-terminus: 3-dehydroquinate dehydratase (145 aa).

The Proton acceptor role is filled by tyrosine 23. Substrate is bound by residues asparagine 74, histidine 80, and aspartate 87. Histidine 100 acts as the Proton donor in catalysis. Substrate is bound by residues 101-102 and arginine 111; that span reads IS.

The protein belongs to the type-II 3-dehydroquinase family. In terms of assembly, homododecamer.

The catalysed reaction is 3-dehydroquinate = 3-dehydroshikimate + H2O. Its pathway is metabolic intermediate biosynthesis; chorismate biosynthesis; chorismate from D-erythrose 4-phosphate and phosphoenolpyruvate: step 3/7. In terms of biological role, catalyzes a trans-dehydration via an enolate intermediate. The polypeptide is 3-dehydroquinate dehydratase (Dictyoglomus turgidum (strain DSM 6724 / Z-1310)).